The sequence spans 1938 residues: Myosin-1 (1938 aa).

A Myosin N-terminal SH3-like domain is found at 33-82; that stretch reads DAKTSVFVADPKESFVKATVQSREGGKVTAKTEAGATVTVKEDQVFPMNP. Phosphothreonine is present on residues Thr-64 and Thr-69. The Myosin motor domain maps to 86–781; sequence DKIEDMAMMT…LLGLLEEMRD (696 aa). N6,N6,N6-trimethyllysine is present on Lys-130. ATP is bound at residue 179 to 186; the sequence is GESGAGKT. Tyr-389 is modified (phosphotyrosine). Thr-419 is modified (phosphothreonine). A Phosphotyrosine modification is found at Tyr-424. Phosphoserine is present on Ser-625. An actin-binding region spans residues 658-680; the sequence is LNKLMTNLRSTHPHFVRCIIPNE. At His-756 the chain carries Pros-methylhistidine. Residues 760–774 are actin-binding; sequence KFGHTKVFFKAGLLG. The region spanning 784-813 is the IQ domain; sequence LAQLITRTQARCRGFLARVEYQKMVERRES. Residues 842–1938 are a coiled coil; sequence LLKSAETEKE…EVHTKIISEE (1097 aa). Residues Ser-1091 and Ser-1095 each carry the phosphoserine modification. Disordered stretches follow at residues 1124–1146 and 1152–1171; these read EIEAERASRAKAEKQRSDLSREL and RLEEAGGATSAQIEMNKKRE. Basic and acidic residues predominate over residues 1127–1146; sequence AERASRAKAEKQRSDLSREL. 2 positions are modified to phosphoserine: Ser-1161 and Ser-1236. The residue at position 1240 (Thr-1240) is a Phosphothreonine. Phosphoserine is present on residues Ser-1242 and Ser-1260. Residues Thr-1264 and Thr-1285 each carry the phosphothreonine modification. 4 positions are modified to phosphoserine: Ser-1287, Ser-1291, Ser-1302, and Ser-1305. A Phosphotyrosine modification is found at Tyr-1463. Thr-1466 is modified (phosphothreonine). Ser-1473 carries the phosphoserine modification. Phosphotyrosine is present on Tyr-1491. A Phosphoserine modification is found at Ser-1494. Thr-1500 bears the Phosphothreonine mark. Position 1513 is a phosphoserine (Ser-1513). The residue at position 1516 (Thr-1516) is a Phosphothreonine. Phosphoserine occurs at positions 1541, 1553, 1573, 1599, 1602, 1713, and 1725. Phosphothreonine is present on residues Thr-1729 and Thr-1735.

The protein belongs to the TRAFAC class myosin-kinesin ATPase superfamily. Myosin family. Muscle myosin is a hexameric protein that consists of 2 heavy chain subunits (MHC), 2 alkali light chain subunits (MLC) and 2 regulatory light chain subunits (MLC-2). Interacts with SLC26A5.

It localises to the cytoplasm. It is found in the myofibril. Required for normal hearing. It plays a role in cochlear amplification of auditory stimuli, likely through the positive regulation of prestin (SLC26A5) activity and outer hair cell (OHC) electromotility. The sequence is that of Myosin-1 (MYH1) from Bos taurus (Bovine).